Consider the following 107-residue polypeptide: Lipid-anchored protein YDL012C (107 aa).

Over residues 1–18 the composition is skewed to polar residues; the sequence is MSAQDYYGNSASKQSYSR. The segment at 1–86 is disordered; sequence MSAQDYYGNS…VQQQPASSGN (86 aa). N-acetylserine is present on serine 2. A Glycyl lysine isopeptide (Lys-Gly) (interchain with G-Cter in ubiquitin) cross-link involves residue lysine 13. A compositionally biased stretch (low complexity) spans 35 to 81; sequence PSQSQQNYYPPQQQQQQYQQQPQYYQQQQPQYYQQHPQQPIYVQQQP.

This sequence belongs to the CYSTM1 family.

The protein localises to the cell membrane. This chain is Lipid-anchored protein YDL012C, found in Saccharomyces cerevisiae (strain ATCC 204508 / S288c) (Baker's yeast).